Consider the following 250-residue polypeptide: Carboxy-S-adenosyl-L-methionine synthase (250 aa).

Residues Tyr-45, 70–72 (GCS), 95–96 (DN), 123–124 (DI), Asn-138, and Arg-205 each bind S-adenosyl-L-methionine.

It belongs to the class I-like SAM-binding methyltransferase superfamily. Cx-SAM synthase family. As to quaternary structure, homodimer.

It carries out the reaction prephenate + S-adenosyl-L-methionine = carboxy-S-adenosyl-L-methionine + 3-phenylpyruvate + H2O. Functionally, catalyzes the conversion of S-adenosyl-L-methionine (SAM) to carboxy-S-adenosyl-L-methionine (Cx-SAM). The protein is Carboxy-S-adenosyl-L-methionine synthase of Marinobacter nauticus (strain ATCC 700491 / DSM 11845 / VT8) (Marinobacter aquaeolei).